Consider the following 208-residue polypeptide: Ribosomal RNA large subunit methyltransferase E (208 aa).

Residues G63, W65, D83, D99, and D124 each coordinate S-adenosyl-L-methionine. K164 functions as the Proton acceptor in the catalytic mechanism.

It belongs to the class I-like SAM-binding methyltransferase superfamily. RNA methyltransferase RlmE family.

The protein localises to the cytoplasm. It catalyses the reaction uridine(2552) in 23S rRNA + S-adenosyl-L-methionine = 2'-O-methyluridine(2552) in 23S rRNA + S-adenosyl-L-homocysteine + H(+). Its function is as follows. Specifically methylates the uridine in position 2552 of 23S rRNA at the 2'-O position of the ribose in the fully assembled 50S ribosomal subunit. The protein is Ribosomal RNA large subunit methyltransferase E of Hamiltonella defensa subsp. Acyrthosiphon pisum (strain 5AT).